A 223-amino-acid chain; its full sequence is Ribonuclease T (223 aa).

Positions 1–11 are enriched in acidic residues; that stretch reads MSDDHFDDEQE. A disordered region spans residues 1–21; it reads MSDDHFDDEQEGSSGGPRHPM. An Exonuclease domain is found at 31–205; sequence VVVDVETGGF…YDTEKTAELF (175 aa). 4 residues coordinate Mg(2+): Asp34, Glu36, His192, and Asp197. His192 acts as the Proton donor/acceptor in catalysis.

The protein belongs to the RNase T family. As to quaternary structure, homodimer. Requires Mg(2+) as cofactor.

Its function is as follows. Trims short 3' overhangs of a variety of RNA species, leaving a one or two nucleotide 3' overhang. Responsible for the end-turnover of tRNA: specifically removes the terminal AMP residue from uncharged tRNA (tRNA-C-C-A). Also appears to be involved in tRNA biosynthesis. In Pseudomonas fluorescens (strain ATCC BAA-477 / NRRL B-23932 / Pf-5), this protein is Ribonuclease T.